The following is a 707-amino-acid chain: DNA ligase (707 aa).

Residues 36 to 40, 85 to 86, and Glu-116 contribute to the NAD(+) site; these read DADFD and SL. Lys-118 (N6-AMP-lysine intermediate) is an active-site residue. 4 residues coordinate NAD(+): Arg-139, Glu-180, Lys-298, and Lys-322. Zn(2+) contacts are provided by Cys-416, Cys-419, Cys-434, and Cys-440. The BRCT domain maps to 613–707; that stretch reads AASSKIAGRS…STHVDPERMV (95 aa).

It belongs to the NAD-dependent DNA ligase family. LigA subfamily. The cofactor is Mg(2+). It depends on Mn(2+) as a cofactor.

The catalysed reaction is NAD(+) + (deoxyribonucleotide)n-3'-hydroxyl + 5'-phospho-(deoxyribonucleotide)m = (deoxyribonucleotide)n+m + AMP + beta-nicotinamide D-nucleotide.. In terms of biological role, DNA ligase that catalyzes the formation of phosphodiester linkages between 5'-phosphoryl and 3'-hydroxyl groups in double-stranded DNA using NAD as a coenzyme and as the energy source for the reaction. It is essential for DNA replication and repair of damaged DNA. The chain is DNA ligase from Nitrosospira multiformis (strain ATCC 25196 / NCIMB 11849 / C 71).